The chain runs to 360 residues: Alpha-2-macroglobulin receptor-associated protein (360 aa).

The N-terminal stretch at 1–33 (MAPLRDRVSTLPRLQLLVLLLLPLLLVPQPIAG) is a signal peptide. Residues serine 53 and serine 138 each carry the phosphoserine modification. The stretch at 222-302 (SKHSELKDRL…KHNHYQKQLE (81 aa)) forms a coiled coil. The interval 240 to 356 (RLRKVSHQGY…DLSSRVSRAR (117 aa)) is LDL receptor binding. Asparagine 271 is a glycosylation site (N-linked (GlcNAc...) asparagine). The Prevents secretion from ER motif lies at 357–360 (HNEL).

Belongs to the alpha-2-MRAP family. In terms of assembly, interacts with the LRP1/alpha-2-macroglobulin receptor heavy and light chains; the interaction is transient and coincides with a reduction of ligand binding by the receptor. Interacts with LRP2/glycoprotein 330. Interacts with LRP1B; binding is followed by internalization and degradation. Interacts with LDLR. Interacts with SORL1. Interacts with LRP1; this interaction is followed by rapid internalization. N-glycosylated.

It localises to the rough endoplasmic reticulum lumen. The protein localises to the endoplasmic reticulum-Golgi intermediate compartment lumen. The protein resides in the golgi apparatus. Its subcellular location is the cis-Golgi network. It is found in the golgi apparatus lumen. It localises to the endosome lumen. The protein localises to the cell surface. Its function is as follows. Molecular chaperone for LDL receptor-related proteins that may regulate their ligand binding activity along the secretory pathway. The polypeptide is Alpha-2-macroglobulin receptor-associated protein (Lrpap1) (Rattus norvegicus (Rat)).